Consider the following 375-residue polypeptide: 4,4'-diaponeurosporenoate glycosyltransferase (375 aa).

4 helical membrane-spanning segments follow: residues 7-23 (LLHASTGLSLISGYLMY), 112-132 (ACYLGASYTVSDILIFMDADV), 280-300 (IMMLIILWMVGCITSFSGLAL), and 333-353 (FSILFLAINSILFLVFILVYI).

Belongs to the glycosyltransferase 2 family. CrtQ subfamily.

It is found in the cell membrane. It functions in the pathway carotenoid biosynthesis; staphyloxanthin biosynthesis; staphyloxanthin from farnesyl diphosphate: step 4/5. Functionally, catalyzes the glycosylation of 4,4'-diaponeurosporenoate, i.e. the esterification of glucose at the C1'' position with the carboxyl group of 4,4'-diaponeurosporenic acid, to form glycosyl-4,4'-diaponeurosporenoate. This is a step in the biosynthesis of staphyloxanthin, an orange pigment present in most staphylococci strains. The polypeptide is 4,4'-diaponeurosporenoate glycosyltransferase (crtQ) (Staphylococcus haemolyticus (strain JCSC1435)).